We begin with the raw amino-acid sequence, 765 residues long: Periplasmic beta-glucosidase (765 aa).

Residues 1–20 (MKWLCSVGIAVSLALQPALA) form the signal peptide. Asp287 is a catalytic residue.

This sequence belongs to the glycosyl hydrolase 3 family.

It is found in the periplasm. It catalyses the reaction Hydrolysis of terminal, non-reducing beta-D-glucosyl residues with release of beta-D-glucose.. The protein is Periplasmic beta-glucosidase (bglX) of Escherichia coli (strain K12).